Here is a 271-residue protein sequence, read N- to C-terminus: Metal-staphylopine import system ATP-binding protein CntD (271 aa).

The region spanning 6–251 is the ABC transporter domain; it reads VKHLTITDTW…PEHVYTKYLL (246 aa). An ATP-binding site is contributed by 38 to 45; the sequence is GESGSGKS.

It belongs to the ABC transporter superfamily. As to quaternary structure, the complex is composed of two ATP-binding proteins (CntD and CntF), two transmembrane proteins (CntB and CntC) and a solute-binding protein (CntA).

The protein localises to the cell membrane. Part of the ABC transporter complex CntABCDF (Opp1) involved in the uptake of metal in complex with the metallophore staphylopine (StP). May be involved in the import of a large array of divalent metals ions such as nickel, cobalt, zinc, copper and iron. Probably responsible for energy coupling to the transport system. The polypeptide is Metal-staphylopine import system ATP-binding protein CntD (Staphylococcus aureus (strain Mu50 / ATCC 700699)).